The following is a 14507-amino-acid chain: Mucin-16 (14507 aa).

Residues 1 to 17 (MLKPSGLPGSSSPTRSL) show a composition bias toward low complexity. The disordered stretch occupies residues 1–138 (MLKPSGLPGS…PRTRTSSTEG (138 aa)). The Extracellular segment spans residues 1-14451 (MLKPSGLPGS…EPLTGNSDLP (14451 aa)). Composition is skewed to polar residues over residues 35-46 (TGATLSPKTSTG) and 56-138 (PFTS…STEG). Residue Asn-139 is glycosylated (N-linked (GlcNAc...) asparagine). Disordered regions lie at residues 160–180 (EKYT…ETPW), 198–229 (DSTA…TNPS), 265–287 (FSSP…LSSS), 396–554 (LGGT…STSV), 655–674 (VSKT…SYTM), 695–719 (SLGL…GHTK), and 740–888 (TSTF…RTTL). Residues 166–178 (TETSTTEGDSTET) are compositionally biased toward low complexity. Over residues 212–229 (PAETTVTDSHTPGRTNPS) the composition is skewed to polar residues. 2 stretches are compositionally biased toward low complexity: residues 276 to 287 (SRISTSAPLSSS) and 396 to 413 (LGGT…STTL). 3 stretches are compositionally biased toward polar residues: residues 414-423 (VSEETNTHHS), 431-441 (GTLNTSMTPLE), and 460-478 (GFTT…SSSH). A glycan (N-linked (GlcNAc...) asparagine) is linked at Asn-434. 2 stretches are compositionally biased toward low complexity: residues 485 to 497 (TTGS…SSST) and 508 to 525 (ATTS…ESTA). Polar residues predominate over residues 526–543 (QQFSEPQHTQWVETSPSM). Polar residues-rich tracts occupy residues 696-706 (LGLTPLNTRHP), 740-780 (TSTF…NAAT), 787-796 (NATSPLTHPS), and 805-821 (SVLT…SPNI). The N-linked (GlcNAc...) asparagine glycan is linked to Asn-787. Over residues 823 to 846 (PTGTLTSESSESPSTLSLPSVSGV) the composition is skewed to low complexity. 2 stretches are compositionally biased toward polar residues: residues 847-860 (KTTF…THLF) and 869-888 (TSNP…RTTL). N-linked (GlcNAc...) asparagine glycans are attached at residues Asn-930 and Asn-957. Composition is skewed to polar residues over residues 949 to 969 (SQTN…TWPE), 1092 to 1101 (GSSTPGRTSQ), 1124 to 1137 (GTSS…TATH), and 1301 to 1317 (SGSS…NTGS). 6 disordered regions span residues 949-981 (SQTN…LPSA), 1082-1101 (VSPS…RTSQ), 1121-1149 (PRDG…ARST), 1301-1378 (SGSS…NLTS), 1593-1641 (LGTQ…SSSS), and 1704-1757 (LSES…SPTT). The segment covering 1318–1328 (TWDPTTYITTT) has biased composition (low complexity). Composition is skewed to polar residues over residues 1334–1347 (SSAQ…VRTL), 1368–1378 (PKISSSPNLTS), 1596–1613 (QGRS…STDT), 1621–1633 (GPTN…PMDN), and 1704–1745 (LSES…GSQM). An N-linked (GlcNAc...) asparagine glycan is attached at Asn-1375. Asn-1633 is a glycosylation site (N-linked (GlcNAc...) asparagine). Residues 1746-1757 (STSIPLTSSPTT) are compositionally biased toward low complexity. Asn-1840, Asn-1877, and Asn-1890 each carry an N-linked (GlcNAc...) asparagine glycan. Positions 1846-1908 (DLSHGVHTSS…TEKSEVSSSI (63 aa)) are enriched in polar residues. Disordered regions lie at residues 1846–1930 (DLSH…PGNR), 2010–2033 (VSAS…YSSA), 2064–2140 (WPST…GASI), and 2153–2177 (RSDV…SAGT). Composition is skewed to low complexity over residues 2019–2033 (SVSS…YSSA) and 2064–2085 (WPST…NPSS). Residues 2111 to 2132 (HGPQNTAASTLNTDASSVTGLS) are compositionally biased toward polar residues. N-linked (GlcNAc...) asparagine glycans are attached at residues Asn-2345 and Asn-2375. Disordered stretches follow at residues 2393–2455 (PTSI…PFTI) and 2566–2591 (SESK…ETSA). Composition is skewed to low complexity over residues 2417–2429 (TSTT…TSPS) and 2566–2583 (SESK…TPTS). An N-linked (GlcNAc...) asparagine glycan is attached at Asn-2737. 10 disordered regions span residues 2789-2822 (TTGS…LTMN), 2838-2885 (TATQ…TWGI), 2901-3006 (DTKS…AMTS), 3019-3052 (TGQA…TSRK), 3083-3148 (TLNM…ASSI), 3172-3235 (SQAA…PETT), 3251-3276 (ALGS…PTEN), 3299-3392 (GTPG…KTET), 3415-3436 (TSRS…TSGS), and 3462-3491 (VSLP…VTSP). A compositionally biased stretch (polar residues) spans 2803-2819 (SGSTHSTGTKTFSSLPL). Positions 2864-2875 (SASSSPSKAFAS) are enriched in low complexity. Polar residues-rich tracts occupy residues 2876-2885 (LTTAPPTWGI) and 2901-2918 (DTKS…NTIP). Residues 2919 to 2931 (DSDASTASSSLSK) show a composition bias toward low complexity. A compositionally biased stretch (polar residues) spans 2942 to 2968 (MTSTKAISASSFQSTGFTETPEGSASP). A compositionally biased stretch (low complexity) spans 3019 to 3035 (TGQAARSGSSSSPISLS). Residues 3041 to 3052 (SFLSPTASTSRK) are compositionally biased toward polar residues. N-linked (GlcNAc...) asparagine glycosylation is present at Asn-3085. The span at 3107–3116 (TAETQTLTFT) shows a compositional bias: low complexity. Polar residues-rich tracts occupy residues 3117-3132 (PSET…SPTE) and 3172-3181 (SQAAQGNSTW). The N-linked (GlcNAc...) asparagine glycan is linked to Asn-3178. Residues 3188-3200 (TGSSPAGTSPGSP) are compositionally biased toward low complexity. 2 stretches are compositionally biased toward polar residues: residues 3201 to 3214 (EMST…SKEP) and 3251 to 3261 (ALGSGSTSISH). Over residues 3263-3274 (PTGTTSPTKSPT) the composition is skewed to low complexity. Polar residues-rich tracts occupy residues 3299 to 3342 (GTPG…TTGM) and 3360 to 3383 (VSLS…SSLT). 2 stretches are compositionally biased toward low complexity: residues 3424–3436 (SSTS…TSGS) and 3477–3491 (PSGG…VTSP). Asn-3501 carries N-linked (GlcNAc...) asparagine glycosylation. Residues 3538–3555 (ISTTITTMGTNSISTTTP) are compositionally biased toward low complexity. 8 disordered regions span residues 3538–3588 (ISTT…STAA), 3644–3672 (TPSS…TAST), 3794–3829 (RSSG…GQVP), 3843–3879 (AKTP…TPSA), 3914–3982 (LESG…SPVV), 4024–4056 (MDTS…SSKR), 4094–4121 (AMQT…WTGT), and 4138–4166 (FSKG…VPIH). Polar residues-rich tracts occupy residues 3812–3824 (QTST…TSAH) and 3848–3868 (ATFQ…TSDS). The span at 3916–3927 (SGTTSSPSWKSS) shows a compositional bias: low complexity. Positions 3946–3982 (PSTNTVETTGWVTSSEHASHSTIPAHSASSKLTSPVV) are enriched in polar residues. The span at 4026–4041 (TSSTTQTSIISSPGST) shows a compositional bias: low complexity. The span at 4095–4121 (MQTSPPGATSLSAPTLDTSATASWTGT) shows a compositional bias: polar residues. A compositionally biased stretch (low complexity) spans 4152-4164 (SVEETSSSSSLVP). N-linked (GlcNAc...) asparagine glycosylation is found at Asn-4220, Asn-4498, Asn-4606, Asn-4613, and Asn-4624. Disordered regions lie at residues 4728 to 4748 (VKDV…PSSQ), 4845 to 4961 (HSTV…TRLS), and 5026 to 5066 (VSWT…KLSS). The span at 4856–4876 (KVTSPNVTTSTMEDTTISRSI) shows a compositional bias: polar residues. N-linked (GlcNAc...) asparagine glycosylation is present at Asn-4861. Composition is skewed to low complexity over residues 4877–4914 (PKSS…ETST) and 4924–4939 (TTEV…SSTS). Composition is skewed to polar residues over residues 4944–4961 (DQST…TRLS) and 5026–5037 (VSWTSPPSVDKT). Residues 5038–5047 (SSPSSFLSSP) show a composition bias toward low complexity. The segment covering 5048 to 5059 (AMTTPSLISSTL) has biased composition (polar residues). 3 N-linked (GlcNAc...) asparagine glycosylation sites follow: Asn-5096, Asn-5131, and Asn-5228. Disordered regions lie at residues 5128–5149 (VKAN…ETPK), 5221–5249 (EVSS…DTFT), and 5271–5303 (TQAS…TVTQ). Polar residues predominate over residues 5221–5234 (EVSSTGVNSSSKIS). A compositionally biased stretch (low complexity) spans 5280–5293 (SHSTLPLDTSTTLS). Residues 5294–5303 (QGGTHSTVTQ) show a composition bias toward polar residues. N-linked (GlcNAc...) asparagine glycosylation occurs at Asn-5320. Disordered regions lie at residues 5328-5365 (PVEE…PLPV), 5381-5400 (GTTS…SITH), 5426-5507 (NVGT…TNTA), 5519-5538 (ASRT…DRPT), 5624-5654 (PVEE…ESIP), 5675-5696 (LGTT…PTQE), and 5727-5747 (ISGH…KATS). Composition is skewed to low complexity over residues 5333–5365 (SSVS…PLPV) and 5381–5393 (GTTS…SSPP). An N-linked (GlcNAc...) asparagine glycan is attached at Asn-5394. Polar residues-rich tracts occupy residues 5426 to 5441 (NVGT…SSVL) and 5447 to 5485 (SKAT…TASL). Asn-5470 is a glycosylation site (N-linked (GlcNAc...) asparagine). 4 stretches are compositionally biased toward low complexity: residues 5495–5504 (SEKTSSTTET), 5520–5532 (SRTE…TSIS), 5633–5654 (SLMS…ESIP), and 5675–5688 (LGTT…SSPP). Asn-5689 is a glycosylation site (N-linked (GlcNAc...) asparagine). Residues 5727–5737 (ISGHESQSSVP) are compositionally biased toward polar residues. Residue Asn-5863 is glycosylated (N-linked (GlcNAc...) asparagine). Disordered stretches follow at residues 5882–5931 (STAS…SSPV) and 6054–6078 (STST…TPEL). Polar residues predominate over residues 5903 to 5916 (TTTMSRSTKGVSWQ). Residues 5917–5928 (SPPSVEETSSPS) show a composition bias toward low complexity. The span at 6054 to 6063 (STSTPGSPET) shows a compositional bias: polar residues. Asn-6088 is a glycosylation site (N-linked (GlcNAc...) asparagine). Disordered stretches follow at residues 6122-6149 (PASA…PLTI), 6219-6251 (NSLS…LVSV), 6399-6425 (SRTE…DTST), 6438-6459 (TKSE…SQGT), 6497-6545 (ISGT…TSLP), and 6682-6714 (TTGA…PDIS). Low complexity-rich tracts occupy residues 6134 to 6149 (SPEA…PLTI), 6226 to 6251 (PLLV…LVSV), and 6399 to 6410 (SRTELTSSSRTS). Composition is skewed to polar residues over residues 6411 to 6425 (IQGT…DTST) and 6445 to 6459 (IATQ…SQGT). The span at 6500 to 6523 (TSPPSVEKTSSSSSLLSLPAITSP) shows a compositional bias: low complexity. 2 stretches are compositionally biased toward polar residues: residues 6530–6545 (LPES…TSLP) and 6683–6699 (TGAT…SRRT). N-linked (GlcNAc...) asparagine glycosylation occurs at Asn-6732. Disordered stretches follow at residues 6800–6822 (SFSS…TLPK), 6845–6865 (TLGT…STSH), and 6886–6939 (TAAT…SETT). Residues 6848 to 6864 (TSPEPTTSSPPNLSSTS) show a composition bias toward low complexity. N-linked (GlcNAc...) asparagine glycosylation occurs at Asn-6859. Positions 6886–6905 (TAATNVETTSSGHGSQSSVL) are enriched in polar residues. Positions 6919-6938 (TTSTMGHTTVSTSMSVSSET) are enriched in low complexity. Asn-6961 carries an N-linked (GlcNAc...) asparagine glycan. Disordered regions lie at residues 6981 to 7004 (AEVS…QSTV), 7028 to 7107 (MTIP…ATTS), 7143 to 7208 (TSPE…TSKA), 7279 to 7302 (SRTE…MLPE), 7320 to 7345 (ESSE…TLDT), 7360 to 7427 (QRLP…SLLT), 7437 to 7456 (LDAS…STSV), 7463 to 7503 (EVTT…ETTK), 7527 to 7553 (SNTR…SEET), 7577 to 7597 (TEAI…TMSQ), 7726 to 7782 (ATTT…TTSS), 7825 to 7849 (LASS…TKMS), 7908 to 7927 (HTSP…TSST), and 7970 to 8000 (PSFS…SPLP). The segment covering 7028–7038 (MTIPTQTGPSG) has biased composition (polar residues). Positions 7039-7055 (STSQDTLTLDTSTTKSQ) are enriched in low complexity. Polar residues predominate over residues 7057-7075 (KTHSTLTQRFPHSEMTTLM). The span at 7086-7105 (SSPSLENPSSLPSLLSLPAT) shows a compositional bias: low complexity. Over residues 7166 to 7200 (GKDTTNTEAVHPSTNTAASNVEIPSSGHESPSSAL) the composition is skewed to polar residues. The span at 7279-7298 (SRTEVTSSSRTSISGSAEST) shows a compositional bias: low complexity. Polar residues-rich tracts occupy residues 7322-7345 (SEMT…TLDT), 7360-7371 (QRLPHSEITTLV), and 7390-7402 (SPPS…SAMI). 2 stretches are compositionally biased toward low complexity: residues 7403–7427 (SPSP…SLLT) and 7439–7455 (ASAE…SSTS). The span at 7474–7484 (FSNTAVTKVGT) shows a compositional bias: polar residues. A compositionally biased stretch (low complexity) spans 7485–7494 (SSSGHESPSS). Residues 7733–7749 (GTSTEPGTSSSSSLSTT) show a composition bias toward low complexity. Basic and acidic residues predominate over residues 7750-7765 (SHERLTTYKDTAHTEA). A compositionally biased stretch (polar residues) spans 7768–7782 (PSTNTGGTNVATTSS). Low complexity-rich tracts occupy residues 7835 to 7846 (ESSGSEGTSSGT), 7915 to 7927 (TTQG…TSST), and 7973 to 8000 (SLMS…SPLP). Asn-8029 and Asn-8055 each carry an N-linked (GlcNAc...) asparagine glycan. Disordered regions lie at residues 8042 to 8078 (EVTT…LADS), 8111 to 8134 (IQTE…GTSL), 8312 to 8331 (GISR…TSHE), 8342 to 8389 (TEDM…YTMG), 8411 to 8472 (TSSL…ISPD), 8604 to 8624 (MLRT…STSA), 8674 to 8741 (SPMA…TKVS), and 8775 to 8880 (TPLT…HSSP). Over residues 8052 to 8078 (PSSNRTVTDVGTSSSGHESTSFVLADS) the composition is skewed to polar residues. Residues 8319 to 8328 (TSSTSNLSST) show a composition bias toward low complexity. A glycan (N-linked (GlcNAc...) asparagine) is linked at Asn-8324. Polar residues predominate over residues 8345-8389 (MQPSTHTAVTNVRTSISGHESQSSVLSDSETPKATSPMGTTYTMG). Residues 8607–8624 (TSSEPETSSPPNLSSTSA) show a composition bias toward low complexity. N-linked (GlcNAc...) asparagine glycosylation is found at Asn-8618 and Asn-8684. 2 stretches are compositionally biased toward polar residues: residues 8674–8740 (SPMA…TTKV) and 8781–8810 (GSAE…SSRA). Low complexity predominate over residues 8850–8880 (TSPPSSLVSLSAVTSPSPLYSTPSESSHSSP). An N-linked (GlcNAc...) asparagine glycan is attached at Asn-8913. Disordered regions lie at residues 8995–9018 (ESTS…SATK) and 9147–9168 (SLSS…DSIH). An N-linked (GlcNAc...) asparagine glycan is attached at Asn-9202. Residues 9294–9307 (SISEETSSATEKST) are compositionally biased toward low complexity. The disordered stretch occupies residues 9294 to 9460 (SISEETSSAT…TPSGSSHSSP (167 aa)). Polar residues-rich tracts occupy residues 9308–9357 (VLSS…STPL) and 9374–9412 (SGAT…TTPM). Positions 9431–9460 (SPPSSLVSSSSVTSPSPLYSTPSGSSHSSP) are enriched in low complexity. Asn-9493 is a glycosylation site (N-linked (GlcNAc...) asparagine). Disordered stretches follow at residues 9611 to 9635 (ATPE…AQST), 9726 to 9753 (SSSS…SPSS), 9771 to 9791 (VLDT…STSV), and 9869 to 9890 (TEPT…ETTS). Residues 9621–9635 (MPSSRTSIPGPAQST) are compositionally biased toward polar residues. 2 stretches are compositionally biased toward low complexity: residues 9774–9790 (TSSE…SSTS) and 9881–9890 (ETSTSEETTS). N-linked (GlcNAc...) asparagine glycosylation is present at Asn-9785. N-linked (GlcNAc...) asparagine glycans are attached at residues Asn-10075 and Asn-10173. Disordered stretches follow at residues 10175–10218 (SLDT…PPAS) and 10445–10469 (TIRP…TGGT). Residues 10178 to 10193 (TSSVTPTNTPSSPGST) show a composition bias toward low complexity. Residues 10194–10212 (HLLQSSKTDFTSSAKTSSP) show a composition bias toward polar residues. N-linked (GlcNAc...) asparagine glycosylation occurs at Asn-10510. The span at 10544-10573 (SLGAETSTALPRTTPSVFNRESETTASLVS) shows a compositional bias: polar residues. 2 disordered regions span residues 10544-10590 (SLGA…DVSS) and 10689-10719 (ETSS…PGAE). N-linked (GlcNAc...) asparagine glycosylation is present at Asn-10700. The segment covering 10708–10719 (ATPSIATSPGAE) has biased composition (polar residues). Asn-10749 carries an N-linked (GlcNAc...) asparagine glycan. The span at 10849–10860 (TTPSMTTSHGAE) shows a compositional bias: polar residues. Disordered stretches follow at residues 10849–10872 (TTPS…TVST), 10898–10926 (LSPG…TPTV), and 11003–11036 (LPTL…TVSP). Positions 10861 to 10872 (SSSAVPTPTVST) are enriched in low complexity. Over residues 11003 to 11018 (LPTLTLSPGEPETTPS) the composition is skewed to low complexity. Asn-11053 carries N-linked (GlcNAc...) asparagine glycosylation. The disordered stretch occupies residues 11072–11092 (SMATSHGAEASSAVPTPTVSP). 2 N-linked (GlcNAc...) asparagine glycosylation sites follow: Asn-11224 and Asn-11263. Composition is skewed to polar residues over residues 11269–11284 (HPAE…TSRF) and 11358–11381 (STTV…SIAT). Disordered stretches follow at residues 11269-11301 (HPAE…SPEA), 11358-11400 (STTV…SPDV), 11508-11537 (KFSH…STTT), 11583-11724 (ETST…TSPR), 11836-11861 (SPTA…TSTM), and 11913-11937 (QTVT…FSRT). A glycan (N-linked (GlcNAc...) asparagine) is linked at Asn-11367. Composition is skewed to polar residues over residues 11583-11594 (ETSTTVSGTIPN), 11631-11651 (VTSQ…TLTP), and 11658-11672 (TTAS…QTGF). N-linked (GlcNAc...) asparagine glycosylation occurs at Asn-11594. Positions 11700-11717 (PVSRTTSSFSHSSPDATP) are enriched in low complexity. Polar residues-rich tracts occupy residues 11849–11861 (PLST…TSTM) and 11913–11928 (QTVT…SVTS). 12 repeat units span residues 12067–12223 (AATV…PSPT), 12224–12381 (TAGP…PTIM), 12382–12537 (AAGP…PSPA), 12538–12692 (TAGP…PSPT), 12693–12848 (TAGP…PSPT), 12849–13004 (SAGP…PSPT), 13005–13160 (TAVP…PSPT), 13161–13316 (TTGP…PGPT), 13317–13472 (ATGP…SGPM), 13473–13628 (TASP…PGPS), 13629–13784 (AASP…FGPS), and 13785–13939 (AASH…RYMA). Positions 12067–13939 (AATVPFMVPF…FTINNLRYMA (1873 aa)) are 12 X approximate tandem repeats. Residues 12072 to 12193 (FMVPFTLNFT…NSLYVNGFTH (122 aa)) form the SEA 1 domain. N-linked (GlcNAc...) asparagine glycosylation is found at Asn-12079, Asn-12100, and Asn-12116. Residues Cys-12126 and Cys-12146 are joined by a disulfide bond. Asn-12168 carries an N-linked (GlcNAc...) asparagine glycan. A disordered region spans residues 12196–12226 (SMPTTSTPGTSTVDVGTSGTPSSSPSPTTAG). Residues 12228 to 12349 (LLMPFTLNFT…NSLYVNGFTH (122 aa)) form the SEA 2 domain. Residues Asn-12235 and Asn-12272 are each glycosylated (N-linked (GlcNAc...) asparagine). A disulfide bond links Cys-12282 and Cys-12302. A disordered region spans residues 12353–12376 (VSTTSTPGTSTVDLRTSGTPSSLS). 3 consecutive SEA domains span residues 12386–12507 (LLVP…GFTH), 12542–12663 (LLVL…GFTH), and 12697–12818 (LLVP…GFTH). N-linked (GlcNAc...) asparagine glycosylation is found at Asn-12393, Asn-12414, and Asn-12430. Residues Cys-12440 and Cys-12460 are joined by a disulfide bond. N-linked (GlcNAc...) asparagine glycans are attached at residues Asn-12549, Asn-12570, and Asn-12586. The cysteines at positions 12596 and 12616 are disulfide-linked. Asn-12704, Asn-12725, and Asn-12741 each carry an N-linked (GlcNAc...) asparagine glycan. Cys-12751 and Cys-12771 are disulfide-bonded. Residues 12819-12834 (QTSAPNTSTPGTSTVD) show a composition bias toward polar residues. A disordered region spans residues 12819-12849 (QTSAPNTSTPGTSTVDLGTSGTPSSLPSPTS). The N-linked (GlcNAc...) asparagine glycan is linked to Asn-12824. A compositionally biased stretch (low complexity) spans 12835–12849 (LGTSGTPSSLPSPTS). The 122-residue stretch at 12853–12974 (LLVPFTLNFT…NSLYVNGFTH (122 aa)) folds into the SEA 6 domain. N-linked (GlcNAc...) asparagine glycosylation is found at Asn-12860, Asn-12881, and Asn-12897. A disulfide bridge connects residues Cys-12907 and Cys-12927. Over residues 12978–12990 (VAPTSTPGTSTVD) the composition is skewed to polar residues. The disordered stretch occupies residues 12978 to 13003 (VAPTSTPGTSTVDLGTSGTPSSLPSP). Positions 12991–13003 (LGTSGTPSSLPSP) are enriched in low complexity. SEA domains are found at residues 13009–13130 (LLVP…GFTH) and 13165–13286 (LLVP…GFTQ). 3 N-linked (GlcNAc...) asparagine glycosylation sites follow: Asn-13016, Asn-13037, and Asn-13053. A disulfide bridge connects residues Cys-13063 and Cys-13083. N-linked (GlcNAc...) asparagine glycosylation is found at Asn-13172 and Asn-13193. Cys-13219 and Cys-13239 are oxidised to a cystine. The segment covering 13291-13313 (PTTSTPGTFTVQPETSETPSSLP) has biased composition (polar residues). Residues 13291-13317 (PTTSTPGTFTVQPETSETPSSLPGPTA) form a disordered region. SEA domains follow at residues 13321–13442 (VLLP…GFTH) and 13477–13598 (LLVL…GFTQ). Residues Asn-13328, Asn-13349, and Asn-13365 are each glycosylated (N-linked (GlcNAc...) asparagine). The cysteines at positions 13375 and 13395 are disulfide-linked. N-linked (GlcNAc...) asparagine glycosylation is found at Asn-13484, Asn-13505, and Asn-13521. A disulfide bond links Cys-13531 and Cys-13551. Residues 13603–13621 (PTTSIPGTPTVDLGTSGTP) are compositionally biased toward polar residues. The interval 13603–13625 (PTTSIPGTPTVDLGTSGTPVSKP) is disordered. 4 SEA domains span residues 13633 to 13754 (LLVL…GFTH), 13789 to 13909 (LLIL…GFTH), 13922 to 14043 (SEEP…GYNE), and 14073 to 14193 (HLKT…GYAP). 2 N-linked (GlcNAc...) asparagine glycosylation sites follow: Asn-13640 and Asn-13661. A disulfide bond links Cys-13687 and Cys-13707. N-linked (GlcNAc...) asparagine glycans are attached at residues Asn-13733, Asn-13744, Asn-13796, Asn-13816, Asn-13832, Asn-13929, and Asn-13950. Cys-13976 and Cys-13996 form a disulfide bridge. Residues Asn-14080 and Asn-14100 are each glycosylated (N-linked (GlcNAc...) asparagine). A disulfide bridge links Cys-14126 with Cys-14146. N-linked (GlcNAc...) asparagine glycosylation is found at Asn-14195, Asn-14212, Asn-14254, Asn-14287, Asn-14326, and Asn-14363. 2 SEA domains span residues 14198 to 14309 (IRGE…EMES) and 14319 to 14438 (STQH…GYSP). A disulfide bridge links Cys-14373 with Cys-14393. Asn-14417 and Asn-14423 each carry an N-linked (GlcNAc...) asparagine glycan. A helical transmembrane segment spans residues 14452–14472 (FWAVILIGLAGLLGVITCLIC). The Cytoplasmic segment spans residues 14473 to 14507 (GVLVTTRRRKKEGEYNVQQQCPGYYQSHLDLEDLQ).

In terms of assembly, binds to MSLN. Binding to MSLN mediates heterotypic cell adhesion. This may contribute to the metastasis of ovarian cancer to the peritoneum by initiating cell attachment to the mesothelial epithelium via binding to MSLN. Heavily O-glycosylated; expresses both type 1 and type 2 core glycans. Post-translationally, heavily N-glycosylated; expresses primarily high mannose and complex bisecting type N-linked glycans. In terms of processing, may be phosphorylated. Phosphorylation of the intracellular C-terminal domain may induce proteolytic cleavage and the liberation of the extracellular domain into the extracellular space. May contain numerous disulfide bridges. Association of several molecules of the secreted form may occur through interchain disulfide bridges providing an extraordinarily large gel-like matrix in the extracellular space or in the lumen of secretory ducts. As to expression, expressed in corneal and conjunctival epithelia (at protein level). Overexpressed in ovarian carcinomas and ovarian low malignant potential (LMP) tumors as compared to the expression in normal ovarian tissue and ovarian adenomas.

It localises to the cell membrane. The protein localises to the secreted. Its subcellular location is the extracellular space. Its function is as follows. Thought to provide a protective, lubricating barrier against particles and infectious agents at mucosal surfaces. In Homo sapiens (Human), this protein is Mucin-16.